A 329-amino-acid chain; its full sequence is D-alanine--D-alanine ligase (329 aa).

Positions 120–326 constitute an ATP-grasp domain; sequence KLWLSAIGIP…FAHYLEQILR (207 aa). 150–205 contributes to the ATP binding site; the sequence is ALAKWGKVFIKAASQGSSVGCYSASNETDLLQGIKDAFGYSEQVLIEKAVKPRELE. 3 residues coordinate Mg(2+): Asp280, Glu293, and Asn295.

The protein belongs to the D-alanine--D-alanine ligase family. The cofactor is Mg(2+). It depends on Mn(2+) as a cofactor.

The protein localises to the cytoplasm. It carries out the reaction 2 D-alanine + ATP = D-alanyl-D-alanine + ADP + phosphate + H(+). It participates in cell wall biogenesis; peptidoglycan biosynthesis. Cell wall formation. In Aeromonas salmonicida (strain A449), this protein is D-alanine--D-alanine ligase.